A 232-amino-acid polypeptide reads, in one-letter code: Small ribosomal subunit protein uS3 (232 aa).

The KH type-2 domain maps to 39–107; it reads IRKFLKTKLY…DIAINIKEER (69 aa). Positions 213–222 are enriched in basic and acidic residues; sequence QADKNEDTSP. Residues 213-232 form a disordered region; that stretch reads QADKNEDTSPKKPRRARRGK. The span at 223–232 shows a compositional bias: basic residues; it reads KKPRRARRGK.

The protein belongs to the universal ribosomal protein uS3 family. In terms of assembly, part of the 30S ribosomal subunit. Forms a tight complex with proteins S10 and S14.

Functionally, binds the lower part of the 30S subunit head. Binds mRNA in the 70S ribosome, positioning it for translation. The sequence is that of Small ribosomal subunit protein uS3 from Campylobacter fetus subsp. fetus (strain 82-40).